A 312-amino-acid chain; its full sequence is Dihydroorotate dehydrogenase B (NAD(+)), catalytic subunit (312 aa).

FMN is bound by residues serine 23 and 47–48 (KA). Substrate is bound by residues lysine 47 and 71–75 (NAIGL). The FMN site is built by asparagine 103 and asparagine 131. Asparagine 131 serves as a coordination point for substrate. The active-site Nucleophile is cysteine 134. FMN-binding residues include lysine 171 and isoleucine 197. 198-199 (NT) provides a ligand contact to substrate. Residues glycine 223, 249-250 (GG), and 271-272 (GT) each bind FMN.

This sequence belongs to the dihydroorotate dehydrogenase family. Type 1 subfamily. As to quaternary structure, heterotetramer of 2 PyrK and 2 PyrD type B subunits. It depends on FMN as a cofactor.

Its subcellular location is the cytoplasm. The enzyme catalyses (S)-dihydroorotate + NAD(+) = orotate + NADH + H(+). It functions in the pathway pyrimidine metabolism; UMP biosynthesis via de novo pathway; orotate from (S)-dihydroorotate (NAD(+) route): step 1/1. Functionally, catalyzes the conversion of dihydroorotate to orotate with NAD(+) as electron acceptor. This chain is Dihydroorotate dehydrogenase B (NAD(+)), catalytic subunit (pyrDB), found in Streptococcus pneumoniae (strain ATCC BAA-255 / R6).